The chain runs to 183 residues: Ribosome maturation factor RimM (183 aa).

Positions 104–183 (EGDYYWKDLM…TIEVDWDPGF (80 aa)) constitute a PRC barrel domain.

The protein belongs to the RimM family. As to quaternary structure, binds ribosomal protein uS19.

The protein resides in the cytoplasm. Its function is as follows. An accessory protein needed during the final step in the assembly of 30S ribosomal subunit, possibly for assembly of the head region. Essential for efficient processing of 16S rRNA. May be needed both before and after RbfA during the maturation of 16S rRNA. It has affinity for free ribosomal 30S subunits but not for 70S ribosomes. The chain is Ribosome maturation factor RimM from Salmonella choleraesuis (strain SC-B67).